The sequence spans 383 residues: Ceramide synthase 3 (383 aa).

Residues 32–52 form a helical membrane-spanning segment; that stretch reads VFVKPSHLYVTIPYAFLLLII. Residues 66–127 form a homeobox-like region; that stretch reads KSFGIKETVR…RSRRNQERPS (62 aa). Positions 130–331 constitute a TLC domain; the sequence is KKFQEACWRF…ILKMLNRCIF (202 aa). The next 5 membrane-spanning stretches (helical) occupy residues 139–159, 174–194, 205–225, 264–284, and 298–318; these read FAFY…KPWL, LLPS…SLLF, FLAH…SWCA, FFIF…FWIL, and FFSY…HLYW. The Cytoplasmic portion of the chain corresponds to 319 to 383; sequence GYYILKMLNR…HLIPNGQHGH (65 aa). Serine 340 is modified (phosphoserine). A compositionally biased stretch (acidic residues) spans 342-355; the sequence is DEDYEEEEEEEEEE. Positions 342-363 are disordered; that stretch reads DEDYEEEEEEEEEEATKGKEMD.

In terms of tissue distribution, expressed in the epidermis, where it localizes at the interface between the stratum granulosum and the stratum corneum (at protein level).

It is found in the endoplasmic reticulum membrane. It carries out the reaction a very long-chain fatty acyl-CoA + a sphingoid base = an N-(very-long-chain fatty acyl)-sphingoid base + CoA + H(+). It catalyses the reaction docosanoyl-CoA + sphinganine = N-docosanoylsphinganine + CoA + H(+). The enzyme catalyses tetracosanoyl-CoA + sphinganine = N-tetracosanoylsphinganine + CoA + H(+). The catalysed reaction is hexacosanoyl-CoA + sphinganine = N-hexacosanoylsphinganine + CoA + H(+). It carries out the reaction 2-hydroxydocosanoyl-CoA + sphinganine = N-(2-hydroxydocosanoyl)-sphinganine + CoA + H(+). It catalyses the reaction 2-hydroxytetracosanoyl-CoA + sphinganine = N-(2-hydroxytetracosanoyl)-sphinganine + CoA + H(+). The enzyme catalyses an ultra-long-chain fatty acyl-CoA + a sphingoid base = an N-(ultra-long-chain-acyl)-sphingoid base + CoA + H(+). The catalysed reaction is octacosanoyl-CoA + sphinganine = N-(octacosanoyl)-sphinganine + CoA + H(+). It carries out the reaction a fatty acyl-CoA + sphing-4-enine = an N-acylsphing-4-enine + CoA + H(+). It catalyses the reaction sphinganine + octadecanoyl-CoA = N-(octadecanoyl)-sphinganine + CoA + H(+). The enzyme catalyses 2-hydroxyoctadecanoyl-CoA + sphinganine = N-(2-hydroxyoctadecanoyl)-sphinganine + CoA + H(+). Its pathway is lipid metabolism; sphingolipid metabolism. Its function is as follows. Ceramide synthase that catalyzes the transfer of the acyl chain from acyl-CoA to a sphingoid base, with high selectivity toward very- and ultra-long-chain fatty acyl-CoA (chain length greater than C22). N-acylates sphinganine and sphingosine bases to form dihydroceramides and ceramides in de novo synthesis and salvage pathways, respectively. It is crucial for the synthesis of ultra-long-chain ceramides in the epidermis, to maintain epidermal lipid homeostasis and terminal differentiation. The chain is Ceramide synthase 3 from Homo sapiens (Human).